A 467-amino-acid polypeptide reads, in one-letter code: Asparagine--tRNA ligase (467 aa).

It belongs to the class-II aminoacyl-tRNA synthetase family. Homodimer.

It localises to the cytoplasm. The catalysed reaction is tRNA(Asn) + L-asparagine + ATP = L-asparaginyl-tRNA(Asn) + AMP + diphosphate + H(+). The sequence is that of Asparagine--tRNA ligase from Haemophilus influenzae (strain PittGG).